Consider the following 842-residue polypeptide: Serine/threonine-protein kinase CLA4 (842 aa).

The tract at residues 12–34 is disordered; sequence DNDFQNIGPAPRPPSSNSQGRTC. Phosphoserine occurs at positions 29 and 46. Positions 61–179 constitute a PH domain; it reads SKKKSGWVSY…WLDAIFAKCP (119 aa). The region spanning 184 to 197 is the CRIB domain; that stretch reads VSSPTNFTHKVHVG. Over residues 247–274 the composition is skewed to polar residues; the sequence is GNPTNTLDKPQSGETSSSQKSLPNSYND. A disordered region spans residues 247-524; sequence GNPTNTLDKP…KPKKPARPTM (278 aa). Low complexity predominate over residues 279-296; the sequence is NNSVNSKSSSGVSSSMVS. The span at 297 to 307 shows a compositional bias: polar residues; sequence QRKTSQPPNTK. Low complexity predominate over residues 308–319; sequence SPVSLGSGSLPP. The span at 323-343 shows a compositional bias: polar residues; it reads KLPTSQSNIPRHLQNVPNQQY. Ser351 and Ser367 each carry phosphoserine. Over residues 372 to 387 the composition is skewed to low complexity; sequence QQQQQQQQQQKQQHQQ. The segment covering 396-408 has biased composition (pro residues); that stretch reads SPSPSPSPSPLNP. A compositionally biased stretch (low complexity) spans 418–435; sequence PYSKQPQSPLSSQSTQNQ. Ser425 is subject to Phosphoserine. Composition is skewed to polar residues over residues 470 to 481 and 488 to 497; these read PSNQNATSNTHV and NDQSTPQTMR. One can recognise a Protein kinase domain in the interval 546–825; sequence FKVIEKAGQG…TEELLHHGFF (280 aa). ATP is bound by residues 552–560 and Lys594; that span reads AGQGASGSV. The active-site Proton acceptor is the Asp693.

It belongs to the protein kinase superfamily. STE Ser/Thr protein kinase family. STE20 subfamily. As to quaternary structure, interacts with CDC42.

The catalysed reaction is L-seryl-[protein] + ATP = O-phospho-L-seryl-[protein] + ADP + H(+). The enzyme catalyses L-threonyl-[protein] + ATP = O-phospho-L-threonyl-[protein] + ADP + H(+). Its function is as follows. Involved in budding and cytokinesis. This is Serine/threonine-protein kinase CLA4 (CLA4) from Saccharomyces cerevisiae (strain ATCC 204508 / S288c) (Baker's yeast).